The sequence spans 490 residues: ABC transporter ATP-binding protein ModF (490 aa).

2 consecutive ABC transporter domains span residues 4–235 and 261–489; these read LQIL…AHSE and IVLN…LTKI. ATP-binding positions include 36–43 and 293–300; these read GSNGSGKS and GPNGAGKS.

It belongs to the ABC transporter superfamily.

It localises to the cell inner membrane. Its function is as follows. Probably not involved in the transport of molybdenum into the cell. The polypeptide is ABC transporter ATP-binding protein ModF (modF) (Escherichia coli (strain K12)).